A 165-amino-acid polypeptide reads, in one-letter code: Methylated-DNA--protein-cysteine methyltransferase (165 aa).

The Nucleophile; methyl group acceptor role is filled by C126.

Belongs to the MGMT family.

The protein localises to the cytoplasm. The catalysed reaction is a 6-O-methyl-2'-deoxyguanosine in DNA + L-cysteinyl-[protein] = S-methyl-L-cysteinyl-[protein] + a 2'-deoxyguanosine in DNA. The enzyme catalyses a 4-O-methyl-thymidine in DNA + L-cysteinyl-[protein] = a thymidine in DNA + S-methyl-L-cysteinyl-[protein]. Functionally, involved in the cellular defense against the biological effects of O6-methylguanine (O6-MeG) and O4-methylthymine (O4-MeT) in DNA. Repairs the methylated nucleobase in DNA by stoichiometrically transferring the methyl group to a cysteine residue in the enzyme. This is a suicide reaction: the enzyme is irreversibly inactivated. The sequence is that of Methylated-DNA--protein-cysteine methyltransferase from Mycolicibacterium paratuberculosis (strain ATCC BAA-968 / K-10) (Mycobacterium paratuberculosis).